The following is a 429-amino-acid chain: Adenylosuccinate synthetase (429 aa).

GTP is bound by residues 12–18 and 40–42; these read GDEGKGK and GHT. Asp13 serves as the catalytic Proton acceptor. Mg(2+) is bound by residues Asp13 and Gly40. Residues 13–16, 38–41, Thr128, Arg142, Gln223, Thr238, and Arg302 each bind IMP; these read DEGK and NAGH. Catalysis depends on His41, which acts as the Proton donor. 298–304 contributes to the substrate binding site; the sequence is VNTGRKR. Residues Arg304, 330–332, and 412–414 contribute to the GTP site; these read KLD and GVG.

This sequence belongs to the adenylosuccinate synthetase family. Homodimer. Mg(2+) serves as cofactor.

It localises to the cytoplasm. The catalysed reaction is IMP + L-aspartate + GTP = N(6)-(1,2-dicarboxyethyl)-AMP + GDP + phosphate + 2 H(+). It participates in purine metabolism; AMP biosynthesis via de novo pathway; AMP from IMP: step 1/2. Its function is as follows. Plays an important role in the de novo pathway of purine nucleotide biosynthesis. Catalyzes the first committed step in the biosynthesis of AMP from IMP. The chain is Adenylosuccinate synthetase from Corynebacterium jeikeium (strain K411).